We begin with the raw amino-acid sequence, 68 residues long: Potassium channel toxin epsilon-KTx 1.2 (68 aa).

An N-terminal signal peptide occupies residues 1 to 26 (MKFSCGFLLIFLVLSAMIATFSEVEA). Disulfide bonds link C30/C38, C33/C54, C37/C47, and C42/C52. The residue at position 55 (Y55) is a Tyrosine amide. The propeptide occupies 57–68 (RSDLNEEFENYQ).

Belongs to the short scorpion toxin superfamily. Potassium channel inhibitor family. Epsilon-KTx 01 subfamily. Expressed by the venom gland.

Its subcellular location is the secreted. Its function is as follows. Potassium channel blocker. At 3 uM, this toxin blocks voltage-gated potassium channels rKv1.2/KCNA2 (5%), hKv1.3/KCNA3 (10%),rKv1.4/KCNA4 (20%), Kv11/hERG (24%), and Shaker-IR (27%). This chain is Potassium channel toxin epsilon-KTx 1.2, found in Tityus serrulatus (Brazilian scorpion).